A 335-amino-acid chain; its full sequence is Holliday junction branch migration complex subunit RuvB (335 aa).

The large ATPase domain (RuvB-L) stretch occupies residues 1–181; that stretch reads MDRIVEIEKY…FGMQFRLEFY (181 aa). Leu20 is a binding site for ATP. Positions 21, 28, 29, 62, 63, 64, 65, 66, and 67 each coordinate ADP. Residues 128 to 130 and Arg171 each bind ATP; that span reads EDY. Residues Tyr181 and Arg218 each contribute to the ADP site. Residues 182 to 252 form a small ATPAse domain (RuvB-S) region; that stretch reads KDSELALILQ…RANEALNSLG (71 aa). Residues 255–335 are head domain (RuvB-H); it reads ELGFDAMDLR…LNYEKTLFEE (81 aa). Arg309 and Arg314 together coordinate DNA.

It belongs to the RuvB family. As to quaternary structure, homohexamer. Forms an RuvA(8)-RuvB(12)-Holliday junction (HJ) complex. HJ DNA is sandwiched between 2 RuvA tetramers; dsDNA enters through RuvA and exits via RuvB. An RuvB hexamer assembles on each DNA strand where it exits the tetramer. Each RuvB hexamer is contacted by two RuvA subunits (via domain III) on 2 adjacent RuvB subunits; this complex drives branch migration. In the full resolvosome a probable DNA-RuvA(4)-RuvB(12)-RuvC(2) complex forms which resolves the HJ.

It localises to the cytoplasm. The enzyme catalyses ATP + H2O = ADP + phosphate + H(+). Its function is as follows. The RuvA-RuvB-RuvC complex processes Holliday junction (HJ) DNA during genetic recombination and DNA repair, while the RuvA-RuvB complex plays an important role in the rescue of blocked DNA replication forks via replication fork reversal (RFR). RuvA specifically binds to HJ cruciform DNA, conferring on it an open structure. The RuvB hexamer acts as an ATP-dependent pump, pulling dsDNA into and through the RuvAB complex. RuvB forms 2 homohexamers on either side of HJ DNA bound by 1 or 2 RuvA tetramers; 4 subunits per hexamer contact DNA at a time. Coordinated motions by a converter formed by DNA-disengaged RuvB subunits stimulates ATP hydrolysis and nucleotide exchange. Immobilization of the converter enables RuvB to convert the ATP-contained energy into a lever motion, pulling 2 nucleotides of DNA out of the RuvA tetramer per ATP hydrolyzed, thus driving DNA branch migration. The RuvB motors rotate together with the DNA substrate, which together with the progressing nucleotide cycle form the mechanistic basis for DNA recombination by continuous HJ branch migration. Branch migration allows RuvC to scan DNA until it finds its consensus sequence, where it cleaves and resolves cruciform DNA. This chain is Holliday junction branch migration complex subunit RuvB, found in Campylobacter jejuni subsp. jejuni serotype O:2 (strain ATCC 700819 / NCTC 11168).